Consider the following 226-residue polypeptide: Lipoprotein-releasing system ATP-binding protein LolD (226 aa).

Residues 6–226 (LKLDNIRRAF…KMSEGLLVEV (221 aa)) form the ABC transporter domain. Residue 42–49 (GPSGAGKS) participates in ATP binding.

It belongs to the ABC transporter superfamily. Lipoprotein translocase (TC 3.A.1.125) family. In terms of assembly, the complex is composed of two ATP-binding proteins (LolD) and two transmembrane proteins (LolC and LolE).

It localises to the cell inner membrane. Part of the ABC transporter complex LolCDE involved in the translocation of mature outer membrane-directed lipoproteins, from the inner membrane to the periplasmic chaperone, LolA. Responsible for the formation of the LolA-lipoprotein complex in an ATP-dependent manner. The protein is Lipoprotein-releasing system ATP-binding protein LolD of Paramagnetospirillum magneticum (strain ATCC 700264 / AMB-1) (Magnetospirillum magneticum).